Consider the following 115-residue polypeptide: Non-specific lipid-transfer protein 4.2 (115 aa).

A signal peptide spans 1-25 (MARAAATQLVLVAMVAAMLIVATDA). Cystine bridges form between C29–C77, C39–C54, C55–C97, and C75–C111.

The protein belongs to the plant LTP family.

Functionally, plant non-specific lipid-transfer proteins transfer phospholipids as well as galactolipids across membranes. May play a role in wax or cutin deposition in the cell walls of expanding epidermal cells and certain secretory tissues. This is Non-specific lipid-transfer protein 4.2 (LTP4.2) from Hordeum vulgare (Barley).